The chain runs to 601 residues: ATP-dependent lipid A-core flippase (601 aa).

Positions 28-328 constitute an ABC transmembrane type-1 domain; that stretch reads LLSVCGLIVY…LTRVNAEFQR (301 aa). Transmembrane regions (helical) follow at residues 32–52, 81–101, 160–180, 183–203, 267–287, and 296–316; these read CGLI…GPFI, VLLM…FANF, ALIS…LMFY, WKLS…ITIV, AVSQ…VLYA, and DLTA…LQPI. The ABC transporter domain maps to 360–597; the sequence is LRFDNVSFSY…GGMYAKLYQM (238 aa). 394–401 lines the ATP pocket; the sequence is GRSGSGKS.

Belongs to the ABC transporter superfamily. Lipid exporter (TC 3.A.1.106) family. As to quaternary structure, homodimer.

The protein localises to the cell inner membrane. It catalyses the reaction ATP + H2O + lipid A-core oligosaccharideSide 1 = ADP + phosphate + lipid A-core oligosaccharideSide 2.. In terms of biological role, involved in lipopolysaccharide (LPS) biosynthesis. Translocates lipid A-core from the inner to the outer leaflet of the inner membrane. Transmembrane domains (TMD) form a pore in the inner membrane and the ATP-binding domain (NBD) is responsible for energy generation. This is ATP-dependent lipid A-core flippase from Shewanella sp. (strain MR-4).